Reading from the N-terminus, the 241-residue chain is Ribosome assembly factor mrt4 (241 aa).

The protein belongs to the universal ribosomal protein uL10 family. As to quaternary structure, associates with the pre-60S ribosomal particle.

It is found in the nucleus. The protein resides in the nucleolus. It localises to the cytoplasm. Functionally, component of the ribosome assembly machinery. Nuclear paralog of the ribosomal protein P0, it binds pre-60S subunits at an early stage of assembly in the nucleolus, and is replaced by P0 in cytoplasmic pre-60S subunits and mature 80S ribosomes. The sequence is that of Ribosome assembly factor mrt4 from Schizosaccharomyces pombe (strain 972 / ATCC 24843) (Fission yeast).